Here is a 641-residue protein sequence, read N- to C-terminus: Chaperone protein DnaK (641 aa).

The residue at position 199 (threonine 199) is a Phosphothreonine; by autocatalysis. The span at 603–613 shows a compositional bias: polar residues; sequence YTQQGGTAGSE. The disordered stretch occupies residues 603-641; that stretch reads YTQQGGTAGSETHSHEKAGGSGGDDVVDAEFEEVRDDKR. Over residues 627–641 the composition is skewed to acidic residues; the sequence is DVVDAEFEEVRDDKR.

Belongs to the heat shock protein 70 family.

Its function is as follows. Acts as a chaperone. This Methylococcus capsulatus (strain ATCC 33009 / NCIMB 11132 / Bath) protein is Chaperone protein DnaK.